We begin with the raw amino-acid sequence, 277 residues long: ATP-dependent Clp protease proteolytic subunit, mitochondrial (277 aa).

A mitochondrion-targeting transit peptide spans 1–56 (MWPGILVGGARVASCRYPALGPRLAAHFPAQRPPQRTLQNGLALQRCLHATATRAL). Residue serine 153 is the Nucleophile of the active site. The active site involves histidine 178. Position 200 is an N6-succinyllysine (lysine 200). Lysine 211 carries the post-translational modification N6-acetyllysine. Residues 246 to 277 (VHPPQDGEDEPTLVQKEPVEAAPAAEPVPAST) are disordered. Residues 265-277 (EAAPAAEPVPAST) show a composition bias toward low complexity.

Belongs to the peptidase S14 family. As to quaternary structure, fourteen CLPP subunits assemble into 2 heptameric rings which stack back to back to give a disk-like structure with a central cavity. Component of the ClpXP complex formed by the assembly of two CLPP heptameric rings with two CLPX hexameric rings, giving rise to a symmetrical structure with two central CLPP rings flanked by a CLPX ring at either end of the complex. Detected in liver (at protein level). Predominantly expressed in skeletal muscle. Intermediate levels in heart, liver and pancreas. Low in brain, placenta, lung and kidney.

Its subcellular location is the mitochondrion matrix. The catalysed reaction is Hydrolysis of proteins to small peptides in the presence of ATP and magnesium. alpha-casein is the usual test substrate. In the absence of ATP, only oligopeptides shorter than five residues are hydrolyzed (such as succinyl-Leu-Tyr-|-NHMec, and Leu-Tyr-Leu-|-Tyr-Trp, in which cleavage of the -Tyr-|-Leu- and -Tyr-|-Trp bonds also occurs).. Functionally, protease component of the ClpXP complex that cleaves peptides and various proteins in an ATP-dependent process. Has low peptidase activity in the absence of CLPX. The ClpXP complex can degrade CSN1S1, CSN2 and CSN3, as well as synthetic peptides (in vitro) and may be responsible for a fairly general and central housekeeping function rather than for the degradation of specific substrates. Cleaves PINK1 in the mitochondrion. The polypeptide is ATP-dependent Clp protease proteolytic subunit, mitochondrial (Homo sapiens (Human)).